We begin with the raw amino-acid sequence, 168 residues long: Protein-export protein SecB (168 aa).

Over residues 1–10 (MSDQGTNNGE) the composition is skewed to polar residues. A disordered region spans residues 1–22 (MSDQGTNNGESGNGGAQNGEAP).

This sequence belongs to the SecB family. Homotetramer, a dimer of dimers. One homotetramer interacts with 1 SecA dimer.

It is found in the cytoplasm. One of the proteins required for the normal export of preproteins out of the cell cytoplasm. It is a molecular chaperone that binds to a subset of precursor proteins, maintaining them in a translocation-competent state. It also specifically binds to its receptor SecA. This Parvibaculum lavamentivorans (strain DS-1 / DSM 13023 / NCIMB 13966) protein is Protein-export protein SecB.